A 396-amino-acid polypeptide reads, in one-letter code: (S)-8-oxocitronellyl enol synthase ISY2 (396 aa).

NADP(+)-binding positions include 38-40, 66-67, 84-85, 108-109, Gln-146, Tyr-182, Ile-209, and 216-218; these read TGL, RR, DV, TW, and SMM. Tyr-182 is a catalytic residue.

Belongs to the short-chain dehydrogenases/reductases (SDR) family.

It catalyses the reaction (S)-8-oxocitronellyl enol + NADP(+) = (6E)-8-oxogeranial + NADPH + H(+). The enzyme catalyses (S)-8-oxocitronellyl enol + NAD(+) = (6E)-8-oxogeranial + NADH + H(+). Functionally, iridoid synthase that catalyzes the first step in generation of the iridoid ring scaffold using the linear monoterpene (6E)-8-oxogeranial as substrate. Iridoids comprise a large family of distinctive bicyclic monoterpenes that possess a wide range of pharmacological activities, including anticancer, anti-inflammatory, antifungal and antibacterial activities. Catalyzes the conversion of the linear monoterpene (6E)-8-oxogeranial to (S)-8-oxocitronellyl enol, a precursor of nepetalactones, which are metabolites that are both insect-repellent and have euphoric effect in cats. The sequence is that of (S)-8-oxocitronellyl enol synthase ISY2 from Nepeta racemosa (Catmint).